The chain runs to 154 residues: Ribonuclease H (154 aa).

The region spanning methionine 1–serine 142 is the RNase H type-1 domain. Mg(2+) contacts are provided by aspartate 10, glutamate 48, aspartate 70, and aspartate 134. The tract at residues cysteine 133–proline 154 is disordered.

This sequence belongs to the RNase H family. Monomer. Mg(2+) serves as cofactor.

The protein resides in the cytoplasm. The enzyme catalyses Endonucleolytic cleavage to 5'-phosphomonoester.. Endonuclease that specifically degrades the RNA of RNA-DNA hybrids. The protein is Ribonuclease H of Aeromonas hydrophila subsp. hydrophila (strain ATCC 7966 / DSM 30187 / BCRC 13018 / CCUG 14551 / JCM 1027 / KCTC 2358 / NCIMB 9240 / NCTC 8049).